Here is a 446-residue protein sequence, read N- to C-terminus: CBL-interacting serine/threonine-protein kinase 24 (446 aa).

The Protein kinase domain maps to 11-264 (YEVGRTIGEG…IQGIKKDPWF (254 aa)). ATP contacts are provided by residues 17–25 (IGEGTFAKV) and Lys40. Asp134 functions as the Proton acceptor in the catalytic mechanism. The activation loop stretch occupies residues 152–179 (DFGLSALPQEGVELLRTTCGTPNYVAPE). Ser156 carries the post-translational modification Phosphoserine. Phosphothreonine is present on Thr168. Positions 305–329 (EGPLMMNAFEMITLSQGLNLSALFD) constitute an NAF domain. The PPI stretch occupies residues 336 to 365 (KRQTRFVSRREPSEIIANIEAVANSMGFKS).

The protein belongs to the protein kinase superfamily. CAMK Ser/Thr protein kinase family. SNF1 subfamily. In terms of assembly, interacts with CBL1, CBL2, CBL4/SOS3, CBL5, CBL9, CBL10 and with the protein phosphatase 2C ABI2. Mn(2+) serves as cofactor. In terms of processing, autophosphorylated.

It localises to the cytoplasm. The protein resides in the nucleus. The enzyme catalyses L-seryl-[protein] + ATP = O-phospho-L-seryl-[protein] + ADP + H(+). The catalysed reaction is L-threonyl-[protein] + ATP = O-phospho-L-threonyl-[protein] + ADP + H(+). Functionally, involved in the regulatory pathway for the control of intracellular Na(+) and K(+) homeostasis and salt tolerance. Activates the vacuolar H(+)/Ca(2+) antiporter CAX1 and operates in synergy with CBL4/SOS3 to activate the plasma membrane Na(+)/H(+) antiporter SOS1. CIPK serine-threonine protein kinases interact with CBL proteins. Binding of a CBL protein to the regulatory NAF domain of CIPK protein lead to the activation of the kinase in a calcium-dependent manner. Phosphorylates CBL1, CBL4 and CBL10. In Arabidopsis thaliana (Mouse-ear cress), this protein is CBL-interacting serine/threonine-protein kinase 24 (CIPK24).